We begin with the raw amino-acid sequence, 302 residues long: Sulfate adenylyltransferase subunit 2 (302 aa).

Belongs to the PAPS reductase family. CysD subfamily. In terms of assembly, heterodimer composed of CysD, the smaller subunit, and CysN.

The enzyme catalyses sulfate + ATP + H(+) = adenosine 5'-phosphosulfate + diphosphate. The protein operates within sulfur metabolism; hydrogen sulfide biosynthesis; sulfite from sulfate: step 1/3. In terms of biological role, with CysN forms the ATP sulfurylase (ATPS) that catalyzes the adenylation of sulfate producing adenosine 5'-phosphosulfate (APS) and diphosphate, the first enzymatic step in sulfur assimilation pathway. APS synthesis involves the formation of a high-energy phosphoric-sulfuric acid anhydride bond driven by GTP hydrolysis by CysN coupled to ATP hydrolysis by CysD. This chain is Sulfate adenylyltransferase subunit 2, found in Proteus mirabilis (strain HI4320).